The chain runs to 274 residues: Envelope glycoprotein L (274 aa).

Residues 1-21 (MMPLLLLILLSTRNLLGAAQS) form the signal peptide. The 201-residue stretch at 51 to 251 (VEHKCREALA…RSYRDRFPAV (201 aa)) folds into the gL betaherpesvirus-type domain. Residues Cys-156 and Cys-161 are joined by a disulfide bond.

This sequence belongs to the herpesviridae glycoprotein L (gL) family. Betaherpesvirinae gL subfamily. Interacts with glycoprotein H (gH); this interaction is necessary for the correct processing and cell surface expression of gH.

The protein resides in the virion membrane. It localises to the host cell membrane. Its subcellular location is the host Golgi apparatus. The protein localises to the host trans-Golgi network. In terms of biological role, the heterodimer glycoprotein H-glycoprotein L is required for the fusion of viral and plasma membranes leading to virus entry into the host cell. Acts as a functional inhibitor of gH and maintains gH in an inhibited form. Upon binding to host integrins, gL dissociates from gH leading to activation of the viral fusion glycoproteins gB and gH. This Murid herpesvirus 1 (strain Smith) (MuHV-1) protein is Envelope glycoprotein L.